Consider the following 461-residue polypeptide: Squalene synthase BSS (461 aa).

The NADP(+) site is built by arginine 51 and arginine 76. Residues aspartate 79, glutamate 82, and aspartate 83 each coordinate Mg(2+). Residues arginine 219, lysine 322, and arginine 324 each contribute to the NADP(+) site. The helical transmembrane segment at 430 to 450 (VTQHWWSILIFLISIAVFFIP) threads the bilayer.

Belongs to the phytoene/squalene synthase family. Requires Mg(2+) as cofactor.

The protein resides in the endoplasmic reticulum membrane. It catalyses the reaction 2 (2E,6E)-farnesyl diphosphate + NADPH + H(+) = squalene + 2 diphosphate + NADP(+). It carries out the reaction 2 (2E,6E)-farnesyl diphosphate + NADH + H(+) = squalene + 2 diphosphate + NAD(+). Functionally, converts farnesyl diphosphate (FPP) into squalene, a precursor for sterol biosynthesis in eukaryotes. Does not possess botryococcene synthase activity. This is Squalene synthase BSS from Botryococcus braunii (Green alga).